The primary structure comprises 416 residues: Protein-lysine N-trimethyltransferase SMYD5 (416 aa).

The SET domain maps to 21–351 (GSVEVRYVDS…PGEEICISYL (331 aa)). The segment at 98-136 (PELCSVRKDLHQNCPHCQVMYCSAECRLAAAEQYHQILC) adopts an MYND-type zinc-finger fold. Tyr350 is a binding site for S-adenosyl-L-methionine. A disordered region spans residues 383–416 (EADDPNVTSEEEEEEDEEEGEPEDAELGDEMTDV).

The protein belongs to the class V-like SAM-binding methyltransferase superfamily. In terms of assembly, interacts with the N-CoR complex. Interacts with EHMT2 and CBX5. Ubiquitinated and degradaed by the proteasome in response to mild hypothermia (32 degrees Celsius), relieving repression of the SP1 gene.

Its subcellular location is the cytoplasm. It carries out the reaction L-lysyl-[protein] + 3 S-adenosyl-L-methionine = N(6),N(6),N(6)-trimethyl-L-lysyl-[protein] + 3 S-adenosyl-L-homocysteine + 3 H(+). It catalyses the reaction L-lysyl(20)-[histone H4] + 3 S-adenosyl-L-methionine = N(6),N(6),N(6)-trimethyl-L-lysyl(20)-[histone H4] + 3 S-adenosyl-L-homocysteine + 3 H(+). The catalysed reaction is L-lysyl(36)-[histone H3] + 3 S-adenosyl-L-methionine = N(6),N(6),N(6)-trimethyl-L-lysyl(36)-[histone H3] + 3 S-adenosyl-L-homocysteine + 3 H(+). Its function is as follows. Protein-lysine N-trimethyltransferase that specifically catalyzes trimethylation of 'Lys-22' of the RPL40/eL40 subunit of the 60S ribosome, thereby promoting translation elongation and protein synthesis. May also act as a histone methyltransferase in the context of histone octamers, but not on nucleosome substrates: trimethylates 'Lys-36' of histone H3 and 'Lys-20' of histone H4 to form H3K36me3 and H4K20me3, respectively. The histone methyltransferase activity, which is independent of its SET domain, is however unsure in vivo. In association with the NCoR corepressor complex, involved in the repression of toll-like receptor 4 (TLR4)-target inflammatory genes in macrophages, possibly by catalyzing the formation of H4K20me3 at the gene promoters. Plays an important role in embryonic stem (ES) cell self-renewal and differentiation. Maintains genome stability of ES cells during differentiation through regulation of heterochromatin formation and repression of endogenous repetitive DNA elements by promoting H4K20me3 marks. Acts as a regulator of the hypothermia response: its degradation in response to mild hypothermia relieves the formation of H3K36me3 at gene promoters, allowing expression of the neuroprotective gene SP1. This Mus musculus (Mouse) protein is Protein-lysine N-trimethyltransferase SMYD5.